The following is a 193-amino-acid chain: MTLFTENDLLNNSYKSIQKSYHFSENQAAKNILEQAYKNYDKNKIYDIFLSHSFLDARKILGLKNYIEGLGYSVYVDWIEDKQLDRSKVSKETAGILRERMQSCKSLFFAISENSDHSLWMPWELGYFDGIKQKVAILPVLKSSYDDSYNGQEYLGLYPYVAKGTIINSTQEEIWIHSSQKQYVRFRNWLQQN.

As to quaternary structure, homodimer.

It carries out the reaction NAD(+) = 3'cADPR + nicotinamide + H(+). TIR-like domain-containing component of the Thoeris antiviral defense system, composed of ThsA and ThsB and ThsB'. In the presence of NAD(+) produces a signaling molecule that activates cognate ThsA (AC J8G6Z1) to hydrolyze NAD(+). The signaling molecule is a cyclic ADP-D-ribose isomer and may be 3' cyclic ADP-D-ribose (3'cADPR); it is not 2'cADPR. This chain is Probable 3' cyclic ADP-D-ribose synthase ThsB', found in Bacillus cereus (strain MSX-D12).